Reading from the N-terminus, the 248-residue chain is Coenzyme F420:L-glutamate ligase (248 aa).

Residues 15-18 (IPLI), 45-46 (ET), and K50 each bind GTP. Residue D115 coordinates a divalent metal cation. Position 118 (N118) interacts with GTP. Positions 155, 156, and 213 each coordinate a divalent metal cation. Residue 211 to 218 (MGQSNEGI) coordinates GTP.

It belongs to the CofE family. In terms of assembly, homodimer. Requires Mg(2+) as cofactor. It depends on Mn(2+) as a cofactor. K(+) serves as cofactor.

The enzyme catalyses oxidized coenzyme F420-0 + GTP + L-glutamate = oxidized coenzyme F420-1 + GDP + phosphate + H(+). The catalysed reaction is oxidized coenzyme F420-1 + GTP + L-glutamate = oxidized coenzyme F420-2 + GDP + phosphate + H(+). The protein operates within cofactor biosynthesis; coenzyme F420 biosynthesis. Its function is as follows. Catalyzes the GTP-dependent successive addition of two or more gamma-linked L-glutamates to the L-lactyl phosphodiester of 7,8-didemethyl-8-hydroxy-5-deazariboflavin (F420-0) to form coenzyme F420-0-glutamyl-glutamate (F420-2) or polyglutamated F420 derivatives. In Methanococcus maripaludis (strain DSM 14266 / JCM 13030 / NBRC 101832 / S2 / LL), this protein is Coenzyme F420:L-glutamate ligase.